The primary structure comprises 508 residues: Maturase K (508 aa).

This sequence belongs to the intron maturase 2 family. MatK subfamily.

It is found in the plastid. The protein resides in the chloroplast. Its function is as follows. Usually encoded in the trnK tRNA gene intron. Probably assists in splicing its own and other chloroplast group II introns. This chain is Maturase K, found in Stewartia pseudocamellia (Japanese stewartia).